The following is a 248-amino-acid chain: tRNA pseudouridine synthase A (248 aa).

Catalysis depends on aspartate 52, which acts as the Nucleophile. Tyrosine 111 contributes to the substrate binding site.

It belongs to the tRNA pseudouridine synthase TruA family. Homodimer.

It catalyses the reaction uridine(38/39/40) in tRNA = pseudouridine(38/39/40) in tRNA. Functionally, formation of pseudouridine at positions 38, 39 and 40 in the anticodon stem and loop of transfer RNAs. This chain is tRNA pseudouridine synthase A, found in Methylocella silvestris (strain DSM 15510 / CIP 108128 / LMG 27833 / NCIMB 13906 / BL2).